A 119-amino-acid chain; its full sequence is MSNIRALGAYRNALRATRVAFKTDLPVLMAARTQIKQGFVDNKDLADQEQQHEAIDKMNEVSQFLIKNIVQGEKQEGDKYFLNFHERTELGDNETIKQSKAEMGSLAGARAKKYSNIKK.

A mitochondrion-targeting transit peptide spans 1-14; it reads MSNIRALGAYRNAL.

The protein belongs to the complex I LYR family. MZM1 subfamily. As to quaternary structure, interacts with RIP1.

The protein localises to the mitochondrion matrix. In terms of biological role, assembly factor required for Rieske Fe-S protein RIP1 incorporation into the cytochrome b-c1 (CIII) complex. Functions as a chaperone, binding to this subunit within the mitochondrial matrix and stabilizing it prior to its translocation and insertion into the late CIII dimeric intermediate within the mitochondrial inner membrane. Modulates the mitochondrial matrix zinc pool. This Debaryomyces hansenii (strain ATCC 36239 / CBS 767 / BCRC 21394 / JCM 1990 / NBRC 0083 / IGC 2968) (Yeast) protein is Mitochondrial zinc maintenance protein 1, mitochondrial (MZM1).